We begin with the raw amino-acid sequence, 130 residues long: MMKLIQLCILFWCWRAICCHSCELTNITISVEKEECRFCISINTTWCAGYCYTRDLVYKDPARPNTQKVCTFKELVYETVRLPGCARHSDSLYTYPVATECHCGKCDSDSTDCTVRGLGPSYCSFSEMKE.

Positions 1-20 (MMKLIQLCILFWCWRAICCH) are cleaved as a signal peptide. Disulfide bonds link C22-C70, C36-C85, C39-C123, C47-C101, C51-C103, and C106-C113. 2 N-linked (GlcNAc...) asparagine glycosylation sites follow: N26 and N43.

It belongs to the glycoprotein hormones subunit beta family. In terms of assembly, heterodimer. The active follitropin is a heterodimer composed of an alpha chain/CGA shared with other hormones and a unique beta chain/FSHB shown here.

The protein localises to the secreted. Its function is as follows. Together with the alpha chain CGA constitutes follitropin, the follicle-stimulating hormone, and provides its biological specificity to the hormone heterodimer. Binds FSHR, a G protein-coupled receptor, on target cells to activate downstream signaling pathways. Follitropin is involved in follicle development and spermatogenesis in reproductive organs. This is Follitropin subunit beta (Fshb) from Mus musculus (Mouse).